We begin with the raw amino-acid sequence, 194 residues long: Ion-translocating oxidoreductase complex subunit B (194 aa).

Residues 1–26 are hydrophobic; sequence MSSILIAVIAIAALALVFGLILGFAS. The region spanning 32–90 is the 4Fe-4S domain; it reads ESDPIVEQIDAILPQTQCGQCGYPGCKPYAEAIANGDMINKCPPGGQATIEKLADLMGV. [4Fe-4S] cluster is bound by residues cysteine 49, cysteine 52, cysteine 57, cysteine 73, cysteine 114, cysteine 117, cysteine 120, cysteine 124, cysteine 144, cysteine 147, cysteine 150, and cysteine 154. 2 consecutive 4Fe-4S ferredoxin-type domains span residues 105–134 and 135–164; these read KVAF…GGTK and ALHT…MIPV.

It belongs to the 4Fe4S bacterial-type ferredoxin family. RnfB subfamily. As to quaternary structure, the complex is composed of six subunits: RnfA, RnfB, RnfC, RnfD, RnfE and RnfG. The cofactor is [4Fe-4S] cluster.

The protein localises to the cell inner membrane. Functionally, part of a membrane-bound complex that couples electron transfer with translocation of ions across the membrane. The protein is Ion-translocating oxidoreductase complex subunit B of Aliivibrio fischeri (strain ATCC 700601 / ES114) (Vibrio fischeri).